The following is a 520-amino-acid chain: Putative transporter svop-1 (520 aa).

The Cytoplasmic portion of the chain corresponds to 1–85 (MGDKAILTEV…LGFGRFQLKL (85 aa)). Residues 86–106 (SILTGMAWMADAMEMMLLSLI) form a helical membrane-spanning segment. Topologically, residues 107–120 (SPALACEWGISSVQ) are extracellular. The chain crosses the membrane as a helical span at residues 121 to 141 (QALVTTCVFSGMMLSSTFWGK). At 142-157 (ICDRFGRRKGLTFSTL) the chain is on the cytoplasmic side. Residues 158–178 (VACIMGVISGMSPHFYVLLFF) traverse the membrane as a helical segment. Arg-179 is a topological domain (extracellular). The helical transmembrane segment at 180 to 200 (GLTGFGIGGVPQSVTLYAEFL) threads the bilayer. Residues 201–208 (PTAQRAKC) lie on the Cytoplasmic side of the membrane. Residues 209-229 (VVLIESFWAIGAVFEALLAYF) form a helical membrane-spanning segment. At 230 to 237 (VMESFGWR) the chain is on the extracellular side. Residues 238 to 258 (ALMFLSSLPLGIFAVASFWLP) form a helical membrane-spanning segment. At 259–319 (ESARFDMASG…LLSPDLRKTT (61 aa)) the chain is on the cytoplasmic side. A helical transmembrane segment spans residues 320 to 340 (ILLWCIWAITAFSYYGMVLFT). Residues 341–372 (TVLFQSHDECHGGLFSNGTQMEVCQPLTRSDY) lie on the Extracellular side of the membrane. The helical transmembrane segment at 373-393 (FDLLSTTLAEFPGLIITVLII) threads the bilayer. Topologically, residues 394 to 410 (EWFGRKKTMALEYAVFA) are cytoplasmic. A helical membrane pass occupies residues 411–431 (IFTFLLYFCLDRFTVTVLIFV). The Extracellular segment spans residues 432–434 (ARA). Residues 435 to 455 (FISGAFQCAYVYTPEVYPTTL) traverse the membrane as a helical segment. Residues 456 to 461 (RAVGLG) lie on the Cytoplasmic side of the membrane. The chain crosses the membrane as a helical span at residues 462–487 (TCSAMARIGAIVTPFIAQVASEKSLS). The Extracellular portion of the chain corresponds to 488 to 489 (LP). A helical transmembrane segment spans residues 490–509 (IGIYGTAAILGLIASLSLPI). Over 510-520 (ETKGRQMMDSH) the chain is Cytoplasmic.

The protein belongs to the major facilitator superfamily.

It is found in the membrane. This Caenorhabditis elegans protein is Putative transporter svop-1.